The chain runs to 100 residues: Large ribosomal subunit protein uL23 (100 aa).

The protein belongs to the universal ribosomal protein uL23 family. Part of the 50S ribosomal subunit. Contacts protein L29, and trigger factor when it is bound to the ribosome.

Its function is as follows. One of the early assembly proteins it binds 23S rRNA. One of the proteins that surrounds the polypeptide exit tunnel on the outside of the ribosome. Forms the main docking site for trigger factor binding to the ribosome. This chain is Large ribosomal subunit protein uL23, found in Synechococcus sp. (strain RCC307).